We begin with the raw amino-acid sequence, 91 residues long: Heat shock protein 30E (91 aa).

The disordered stretch occupies residues 62 to 91 (RDQIRQPGAPESEGTSPNTGKDGKDPGNSL). Positions 82 to 91 (KDGKDPGNSL) are enriched in basic and acidic residues.

It belongs to the small heat shock protein (HSP20) family.

The sequence is that of Heat shock protein 30E (hsp30e) from Xenopus laevis (African clawed frog).